A 221-amino-acid chain; its full sequence is Pyridoxine/pyridoxamine 5'-phosphate oxidase (221 aa).

Residues 14 to 17 (RNEY) and Lys-73 contribute to the substrate site. Residues 68–73 (RTVLLK), 83–84 (FT), Lys-90, and Gln-112 each bind FMN. 3 residues coordinate substrate: Tyr-130, Arg-134, and Ser-138. FMN-binding positions include 147 to 148 (QS) and Trp-193. 199 to 201 (RLH) serves as a coordination point for substrate. Arg-203 provides a ligand contact to FMN.

Belongs to the pyridoxamine 5'-phosphate oxidase family. In terms of assembly, homodimer. FMN is required as a cofactor.

It catalyses the reaction pyridoxamine 5'-phosphate + O2 + H2O = pyridoxal 5'-phosphate + H2O2 + NH4(+). The catalysed reaction is pyridoxine 5'-phosphate + O2 = pyridoxal 5'-phosphate + H2O2. Its pathway is cofactor metabolism; pyridoxal 5'-phosphate salvage; pyridoxal 5'-phosphate from pyridoxamine 5'-phosphate: step 1/1. It participates in cofactor metabolism; pyridoxal 5'-phosphate salvage; pyridoxal 5'-phosphate from pyridoxine 5'-phosphate: step 1/1. In terms of biological role, catalyzes the oxidation of either pyridoxine 5'-phosphate (PNP) or pyridoxamine 5'-phosphate (PMP) into pyridoxal 5'-phosphate (PLP). The polypeptide is Pyridoxine/pyridoxamine 5'-phosphate oxidase (Salinispora arenicola (strain CNS-205)).